Here is an 887-residue protein sequence, read N- to C-terminus: Exosome complex component 10 (887 aa).

Over residues 1 to 10 (MAPPSPREHQ) the composition is skewed to basic and acidic residues. Residues 1–23 (MAPPSPREHQSAPATSATKPDAE) form a disordered region. Residue K19 forms a Glycyl lysine isopeptide (Lys-Gly) (interchain with G-Cter in SUMO2) linkage. Residues 289–455 (HLVSSLDELV…YIYDRMRLEL (167 aa)) enclose the 3'-5' exonuclease domain. Mg(2+) contacts are provided by D313, E315, D371, and D440. Residues 503-583 (NSQQLTAFQL…QQAREMPLLK (81 aa)) form the HRDC domain. K583 participates in a covalent cross-link: Glycyl lysine isopeptide (Lys-Gly) (interchain with G-Cter in SUMO1); alternate. K583 participates in a covalent cross-link: Glycyl lysine isopeptide (Lys-Gly) (interchain with G-Cter in SUMO2); alternate. K710 is covalently cross-linked (Glycyl lysine isopeptide (Lys-Gly) (interchain with G-Cter in SUMO2)). Disordered stretches follow at residues 734 to 757 (KEPKEATKKKVAEQTAAREEAKEE) and 777 to 887 (NATK…WPKR). The segment covering 778–796 (ATKKRERATSDLRTIEQKQ) has biased composition (basic and acidic residues). At S823 the chain carries Phosphoserine. Glycyl lysine isopeptide (Lys-Gly) (interchain with G-Cter in SUMO2) cross-links involve residues K835, K861, and K875.

The protein belongs to the exosome component 10/RRP6 family. In terms of assembly, component of the RNA exosome complex. The catalytically inactive RNA exosome core complex (Exo-9) associates with the catalytic subunit EXOSC10/RRP6 (via its N-terminus). Exo-9 may associate with DIS3 to form the nucleolar exosome complex, or DIS3L to form the cytoplasmic exosome complex. The RNA exosome complex interacts with cofactors C1D/RRP47, MPHOSPH6/MPP6 and MTREX/MTR4. Interacts with MTREX; the interaction with MTREX mediates the association of MTREX with nuclear RNA exosomes. Part of the small subunit (SSU) processome, composed of more than 70 proteins and the RNA chaperone small nucleolar RNA (snoRNA) U3. Interacts with ALYREF/THOC4. Interacts with DHX36; this interaction occurs in a RNase-insensitive manner. Interacts with NRDE2. Interacts (via C-terminus) with USP36 (via C-terminus); the interaction is facilitated by the association with RNA and promotes sumoylation of EXOSC10. Requires Mg(2+) as cofactor. Sumoylated by USP36; sumoylation does not significantly affect EXOSC10 nucleolar localization and association with core exosome and USP36, but regulates the nucleolar RNA exosome activity in rRNA processing by promoting binding of EXOSC10 to pre-rRNAs. Effects of sumoylation on EXOSC10 levels vary between different studies. Sumoylation of EXOSC10 is required for the modulation of EXOSC10 effects on cellular protein translation and cell proliferation. Sumoylation is promoted by mild hypothermia. In terms of tissue distribution, expressed in ovary (at protein level). Expressed in testis (at protein level). Expressed in lung (at protein level).

Its subcellular location is the cytoplasm. The protein localises to the nucleus. It localises to the nucleolus. The protein resides in the nucleoplasm. In terms of biological role, catalytic component of the RNA exosome complex which has 3'-&gt;5' exoribonuclease activity and participates in a multitude of cellular RNA processing and degradation events. In the nucleus, the RNA exosome complex is involved in proper maturation of stable RNA species such as rRNA, snRNA and snoRNA, in the elimination of RNA processing by-products and non-coding 'pervasive' transcripts, such as antisense RNA species and promoter-upstream transcripts (PROMPTs), and of mRNAs with processing defects, thereby limiting or excluding their export to the cytoplasm. Part of the small subunit (SSU) processome, first precursor of the small eukaryotic ribosomal subunit. During the assembly of the SSU processome in the nucleolus, many ribosome biogenesis factors, an RNA chaperone and ribosomal proteins associate with the nascent pre-rRNA and work in concert to generate RNA folding, modifications, rearrangements and cleavage as well as targeted degradation of pre-ribosomal RNA by the RNA exosome. The RNA exosome may be involved in Ig class switch recombination (CSR) and/or Ig variable region somatic hypermutation (SHM) by targeting AICDA deamination activity to transcribed dsDNA substrates. In the cytoplasm, the RNA exosome complex is involved in general mRNA turnover and specifically degrades inherently unstable mRNAs containing AU-rich elements (AREs) within their 3' untranslated regions, and in RNA surveillance pathways, preventing translation of aberrant mRNAs. It seems to be involved in degradation of histone mRNA. EXOSC10 is required for nucleolar localization of C1D and probably mediates the association of MTREX, C1D and MPHOSPH6 with the RNA exosome involved in the maturation of 5.8S rRNA. Plays a role in the recruitment of replication protein A complex (RPA) and RAD51 to DNA double-strand breaks caused by irradiation, contributing to DNA repair by homologous recombination. Regulates levels of damage-induced RNAs in order to prevent DNA-RNA hybrid formation at DNA double-strand breaks and limit DNA end resection after damage. Plays a role in oocyte development, maturation and survival. Required for normal testis development and mitotic division of spermatogonia. Plays a role in proper embryo development. Required for global protein translation. Required for cell proliferation. This chain is Exosome complex component 10 (Exosc10), found in Mus musculus (Mouse).